Consider the following 454-residue polypeptide: Chaperone SurA (454 aa).

The signal sequence occupies residues 1 to 28 (MKISSFRKGRWLGALALFAVVCWSMADA). PpiC domains follow at residues 177–278 (DREY…KMLA) and 287–386 (LTKT…QVLE). Positions 431–454 (LDETPASPGEDAPAGEDSPETFMR) are disordered. Acidic residues predominate over residues 443 to 454 (PAGEDSPETFMR).

It localises to the periplasm. The catalysed reaction is [protein]-peptidylproline (omega=180) = [protein]-peptidylproline (omega=0). Functionally, chaperone involved in the correct folding and assembly of outer membrane proteins. Recognizes specific patterns of aromatic residues and the orientation of their side chains, which are found more frequently in integral outer membrane proteins. May act in both early periplasmic and late outer membrane-associated steps of protein maturation. In Methylococcus capsulatus (strain ATCC 33009 / NCIMB 11132 / Bath), this protein is Chaperone SurA.